Here is a 609-residue protein sequence, read N- to C-terminus: Proline--tRNA ligase (609 aa).

Belongs to the class-II aminoacyl-tRNA synthetase family. ProS type 1 subfamily. In terms of assembly, homodimer.

It is found in the cytoplasm. The enzyme catalyses tRNA(Pro) + L-proline + ATP = L-prolyl-tRNA(Pro) + AMP + diphosphate. Catalyzes the attachment of proline to tRNA(Pro) in a two-step reaction: proline is first activated by ATP to form Pro-AMP and then transferred to the acceptor end of tRNA(Pro). As ProRS can inadvertently accommodate and process non-cognate amino acids such as alanine and cysteine, to avoid such errors it has two additional distinct editing activities against alanine. One activity is designated as 'pretransfer' editing and involves the tRNA(Pro)-independent hydrolysis of activated Ala-AMP. The other activity is designated 'posttransfer' editing and involves deacylation of mischarged Ala-tRNA(Pro). The misacylated Cys-tRNA(Pro) is not edited by ProRS. This is Proline--tRNA ligase from Synechococcus sp. (strain JA-3-3Ab) (Cyanobacteria bacterium Yellowstone A-Prime).